We begin with the raw amino-acid sequence, 207 residues long: LysM and putative peptidoglycan-binding domain-containing protein 2 (207 aa).

The region spanning 61 to 105 (IEHRLSPSDTLQGIALKYGVTMEQIKRANKLFSTDCIFLRKSLNI) is the LysM domain. The interval 186 to 207 (AQRLKEEDLRHDDSYATCSYQH) is disordered. Positions 188-199 (RLKEEDLRHDDS) are enriched in basic and acidic residues.

This Xenopus tropicalis (Western clawed frog) protein is LysM and putative peptidoglycan-binding domain-containing protein 2 (lysmd2).